The sequence spans 651 residues: LEAF RUST 10 DISEASE-RESISTANCE LOCUS RECEPTOR-LIKE PROTEIN KINASE-like 1.2 (651 aa).

Residues 1-26 form the signal peptide; that stretch reads MNPSTPSLLYTSIFFYFTIIATQTLS. The Extracellular portion of the chain corresponds to 27–264; sequence LDPKFKACEP…NDKRRRVIVK (238 aa). N-linked (GlcNAc...) asparagine glycans are attached at residues asparagine 88, asparagine 114, asparagine 130, asparagine 136, asparagine 155, asparagine 193, and asparagine 213. Residues 265 to 285 form a helical membrane-spanning segment; the sequence is VLIGASAAVVGLIAASIFWYV. The Cytoplasmic segment spans residues 286–651; sequence YHRRKTKSYR…DSVIVKWDSK (366 aa). A Protein kinase domain is found at 341-613; that stretch reads FDPSKELGDG…PCMSHVQDTL (273 aa). ATP-binding positions include 347-355 and lysine 369; that span reads LGDGGFGTV. Tyrosine 415 carries the post-translational modification Phosphotyrosine. Aspartate 465 acts as the Proton acceptor in catalysis. Serine 498 carries the phosphoserine modification. Phosphothreonine occurs at positions 499 and 504. The residue at position 512 (tyrosine 512) is a Phosphotyrosine.

This sequence belongs to the protein kinase superfamily. Ser/Thr protein kinase family.

It localises to the cell membrane. The protein resides in the membrane. The catalysed reaction is L-seryl-[protein] + ATP = O-phospho-L-seryl-[protein] + ADP + H(+). It catalyses the reaction L-threonyl-[protein] + ATP = O-phospho-L-threonyl-[protein] + ADP + H(+). Probable receptor-like serine/threonine-protein kinase involved in abscisic acid (ABA) signaling. Acts as a positive regulator of abiotic stress response. This chain is LEAF RUST 10 DISEASE-RESISTANCE LOCUS RECEPTOR-LIKE PROTEIN KINASE-like 1.2, found in Arabidopsis thaliana (Mouse-ear cress).